The following is a 274-amino-acid chain: Probable S-adenosylmethionine-dependent methyltransferase MT3114 (274 aa).

The segment at 1 to 24 (MCAFVPHVPRHSRGDNPPSASTAS) is disordered.

It belongs to the methyltransferase superfamily.

Probable S-adenosylmethionine-dependent methyltransferase required for the 6-O-methylation of the polysaccharide backbone of 6-O-methylglucosyl lipopolysaccharides (MGLP). This is Probable S-adenosylmethionine-dependent methyltransferase MT3114 from Mycobacterium tuberculosis (strain CDC 1551 / Oshkosh).